The primary structure comprises 67 residues: Sec-independent protein translocase protein TatA (67 aa).

A helical membrane pass occupies residues 1–21; sequence MFGLGGQELVLILLIVLLLFG.

It belongs to the TatA/E family. As to quaternary structure, forms a complex with TatC.

The protein resides in the cell inner membrane. In terms of biological role, part of the twin-arginine translocation (Tat) system that transports large folded proteins containing a characteristic twin-arginine motif in their signal peptide across membranes. TatA could form the protein-conducting channel of the Tat system. This Chlorobaculum tepidum (strain ATCC 49652 / DSM 12025 / NBRC 103806 / TLS) (Chlorobium tepidum) protein is Sec-independent protein translocase protein TatA.